The chain runs to 452 residues: Ribosomal protein uS12 methylthiotransferase RimO (452 aa).

Residues 5–116 enclose the MTTase N-terminal domain; sequence PTIAFSHLGC…IVDVLQRTES (112 aa). Positions 14, 50, 79, 154, 158, and 161 each coordinate [4Fe-4S] cluster. The 230-residue stretch at 140-369 folds into the Radical SAM core domain; that stretch reads TTTSAVAYLR…MATQQPIAER (230 aa). Residues 372–438 enclose the TRAM domain; sequence RAQIGRLVDV…IYDLHGEVAS (67 aa).

This sequence belongs to the methylthiotransferase family. RimO subfamily. The cofactor is [4Fe-4S] cluster.

It localises to the cytoplasm. It catalyses the reaction L-aspartate(89)-[ribosomal protein uS12]-hydrogen + (sulfur carrier)-SH + AH2 + 2 S-adenosyl-L-methionine = 3-methylsulfanyl-L-aspartate(89)-[ribosomal protein uS12]-hydrogen + (sulfur carrier)-H + 5'-deoxyadenosine + L-methionine + A + S-adenosyl-L-homocysteine + 2 H(+). Functionally, catalyzes the methylthiolation of an aspartic acid residue of ribosomal protein uS12. The sequence is that of Ribosomal protein uS12 methylthiotransferase RimO from Synechococcus sp. (strain ATCC 27144 / PCC 6301 / SAUG 1402/1) (Anacystis nidulans).